Here is an 88-residue protein sequence, read N- to C-terminus: Small ribosomal subunit protein bS20 (88 aa).

The protein belongs to the bacterial ribosomal protein bS20 family.

Functionally, binds directly to 16S ribosomal RNA. This is Small ribosomal subunit protein bS20 from Desulforudis audaxviator (strain MP104C).